The following is a 61-amino-acid chain: Beta-insect depressant toxin BmKIT2 (61 aa).

The region spanning 1–61 is the LCN-type CS-alpha/beta domain; that stretch reads DGYIKGKSGC…TWKSESNTCG (61 aa). 4 cysteine pairs are disulfide-bonded: cysteine 10/cysteine 60, cysteine 14/cysteine 35, cysteine 21/cysteine 42, and cysteine 25/cysteine 44. Glycine amide is present on glycine 61.

This sequence belongs to the long (4 C-C) scorpion toxin superfamily. Sodium channel inhibitor family. Beta subfamily. Expressed by the venom gland.

The protein resides in the secreted. In terms of biological role, on insects, this depressant beta-toxins cause a transient contraction paralysis followed by a slow flaccid paralysis. They bind voltage-independently at site-4 of sodium channels (Nav) and shift the voltage of activation toward more negative potentials thereby affecting sodium channel activation and promoting spontaneous and repetitive firing. This toxin is active against insects and mammals. It is capable of binding to not only cockroach neuronal membranes, but also rat cerebrocortical and hippocampal synaptosomes. This toxin also has potent peripheral and central suppressive effects on rat nociceptive spontaneous responses, thermal hyperalgesia and spinal c-Fos expression induced by formalin and carrageenan, which may be derived from its modulation on the activity of sodium channels of the neurons. Administration of BmKIT2 into rat brain can also suppress the epileptic seizures significantly. The sequence is that of Beta-insect depressant toxin BmKIT2 from Olivierus martensii (Manchurian scorpion).